The chain runs to 20 residues: ADXQPGDSTDKLLAQKQDDV.

The disordered stretch occupies residues 1–20 (ADXQPGDSTDKLLAQKQDDV).

It belongs to the tyrosinase family. Hemocyanin subfamily. Composed of 3 major subunits (IB, II and III) and 1 minor subunit (IA) which form homohexamers and heterohexamers. May also form larger structures. As to expression, hemolymph.

It is found in the secreted. Its subcellular location is the extracellular space. In terms of biological role, hemocyanins are copper-containing oxygen carriers occurring freely dissolved in the hemolymph of many mollusks and arthropods. The polypeptide is Hemocyanin subunit Ia (Panulirus japonicus (Japanese spiny lobster)).